A 475-amino-acid polypeptide reads, in one-letter code: Ribulose bisphosphate carboxylase large chain (475 aa).

A propeptide spanning residues 1 to 2 (MS) is cleaved from the precursor. P3 is subject to N-acetylproline. An N6,N6,N6-trimethyllysine modification is found at K14. Positions 123 and 173 each coordinate substrate. K175 acts as the Proton acceptor in catalysis. K177 serves as a coordination point for substrate. Residues K201, D203, and E204 each coordinate Mg(2+). Position 201 is an N6-carboxylysine (K201). H294 functions as the Proton acceptor in the catalytic mechanism. Substrate is bound by residues R295, H327, and S379.

Belongs to the RuBisCO large chain family. Type I subfamily. Heterohexadecamer of 8 large chains and 8 small chains; disulfide-linked. The disulfide link is formed within the large subunit homodimers. Requires Mg(2+) as cofactor. The disulfide bond which can form in the large chain dimeric partners within the hexadecamer appears to be associated with oxidative stress and protein turnover.

The protein resides in the plastid. The protein localises to the chloroplast. It catalyses the reaction 2 (2R)-3-phosphoglycerate + 2 H(+) = D-ribulose 1,5-bisphosphate + CO2 + H2O. The enzyme catalyses D-ribulose 1,5-bisphosphate + O2 = 2-phosphoglycolate + (2R)-3-phosphoglycerate + 2 H(+). In terms of biological role, ruBisCO catalyzes two reactions: the carboxylation of D-ribulose 1,5-bisphosphate, the primary event in carbon dioxide fixation, as well as the oxidative fragmentation of the pentose substrate in the photorespiration process. Both reactions occur simultaneously and in competition at the same active site. The protein is Ribulose bisphosphate carboxylase large chain of Pelargonium hortorum (Common geranium).